The following is a 514-amino-acid chain: MCQAGEDYAGPARREPPPVPRPSREQKCVKCAEGLPVVVIRAGDAFCRVCFKAFYVHKFRAMLGKNRVIFPGEKVLLSWSGGPSSSSMVWQVLEGLSQDSAKRLRFVPGVIYVDEGAACGQSLEDRQKTVAEVKRILENTGFPWHVVALEEVFSLPPSVLCCTSQESAGTEEAYKAAVDRFLQQQQQQQQRVLGAEAGASPAQGEARLHPSHGREPSGTAGYPTAAQTEALSRLFSSIKTLTAKEELLQTLRTHLIVHIARVHGYCKVMTGETCTRLAIKLMTNLALGRGAFLAWDTGFSDERHGDVVLVRPMRDHTLKEVAFYNHLFRVPSVFTPAIDTKAPEKASIHRLMEAFILRLQTLFPSTVSTVYRTSEKLVKAPREGCAAGPSGPSCLLCMCALDIDTADSATAFGAQSSSHLSQMPSAEAGMPTQPCCAAGEGQAQSCHREVGKRGDARACITEQLCYSCRVNMKDLPSLDPLPPYVLAEAQLRSQRGSVSEEIQEYLITDEEEDS.

Disordered stretches follow at residues 1–23 (MCQAGEDYAGPARREPPPVPRPS) and 192–222 (VLGAEAGASPAQGEARLHPSHGREPSGTAGY). At cysteine 2 the chain carries N-acetylcysteine. Composition is skewed to basic and acidic residues over residues 12–23 (ARREPPPVPRPS) and 206–215 (ARLHPSHGRE). 2 positions are modified to phosphoserine: serine 421 and serine 425.

Belongs to the CTU2/NCS2 family. Component of a complex at least composed of URM1, CTU2/NCS2 and CTU1/ATPBD3.

The protein resides in the cytoplasm. Its pathway is tRNA modification; 5-methoxycarbonylmethyl-2-thiouridine-tRNA biosynthesis. Its function is as follows. Plays a central role in 2-thiolation of mcm(5)S(2)U at tRNA wobble positions of tRNA(Lys), tRNA(Glu) and tRNA(Gln). May act by forming a heterodimer with CTU1/ATPBD3 that ligates sulfur from thiocarboxylated URM1 onto the uridine of tRNAs at wobble position. The chain is Cytoplasmic tRNA 2-thiolation protein 2 (Ctu2) from Mus musculus (Mouse).